The chain runs to 227 residues: Ribose-5-phosphate isomerase A (227 aa).

Substrate-binding positions include 26–29, 82–85, and 95–98; these read TGST, DGAD, and KGGG. E104 (proton acceptor) is an active-site residue. A substrate-binding site is contributed by K122.

This sequence belongs to the ribose 5-phosphate isomerase family. As to quaternary structure, homodimer.

The catalysed reaction is aldehydo-D-ribose 5-phosphate = D-ribulose 5-phosphate. Its pathway is carbohydrate degradation; pentose phosphate pathway; D-ribose 5-phosphate from D-ribulose 5-phosphate (non-oxidative stage): step 1/1. In terms of biological role, catalyzes the reversible conversion of ribose-5-phosphate to ribulose 5-phosphate. In Streptococcus pyogenes serotype M5 (strain Manfredo), this protein is Ribose-5-phosphate isomerase A.